The sequence spans 276 residues: Tryptophan synthase alpha chain (276 aa).

Residues Glu46 and Glu57 each act as proton acceptor in the active site.

It belongs to the TrpA family. As to quaternary structure, tetramer of two alpha and two beta chains.

The catalysed reaction is (1S,2R)-1-C-(indol-3-yl)glycerol 3-phosphate + L-serine = D-glyceraldehyde 3-phosphate + L-tryptophan + H2O. Its pathway is amino-acid biosynthesis; L-tryptophan biosynthesis; L-tryptophan from chorismate: step 5/5. In terms of biological role, the alpha subunit is responsible for the aldol cleavage of indoleglycerol phosphate to indole and glyceraldehyde 3-phosphate. This chain is Tryptophan synthase alpha chain, found in Halobacterium salinarum (strain ATCC 29341 / DSM 671 / R1).